A 313-amino-acid chain; its full sequence is Pyrimidine-specific ribonucleoside hydrolase RihB (313 aa).

D11 serves as the catalytic Proton acceptor. Positions 11, 16, and 124 each coordinate Ca(2+). Q227 and H239 together coordinate substrate. Position 240 (D240) interacts with Ca(2+).

The protein belongs to the IUNH family. RihB subfamily. As to quaternary structure, homotetramer. Ca(2+) serves as cofactor.

It carries out the reaction a pyrimidine ribonucleoside + H2O = a pyrimidine nucleobase + D-ribose. Functionally, hydrolyzes cytidine or uridine to ribose and cytosine or uracil, respectively. Has a clear preference for cytidine over uridine. Strictly specific for ribonucleosides. The chain is Pyrimidine-specific ribonucleoside hydrolase RihB from Escherichia coli O157:H7.